A 35-amino-acid chain; its full sequence is Conotoxin Cal6.1d (35 aa).

Positions Gly-1–Arg-8 are excised as a propeptide. 3 disulfide bridges follow: Cys-9–Cys-25, Cys-16–Cys-29, and Cys-24–Cys-34.

The protein belongs to the conotoxin O1 superfamily. In terms of tissue distribution, expressed by the venom duct.

It is found in the secreted. In terms of biological role, probable neurotoxin with unknown target. Possibly targets ion channels. The sequence is that of Conotoxin Cal6.1d from Californiconus californicus (California cone).